The chain runs to 289 residues: 2-dehydro-3-deoxyphosphooctonate aldolase (289 aa).

It belongs to the KdsA family.

The protein localises to the cytoplasm. It catalyses the reaction D-arabinose 5-phosphate + phosphoenolpyruvate + H2O = 3-deoxy-alpha-D-manno-2-octulosonate-8-phosphate + phosphate. It functions in the pathway carbohydrate biosynthesis; 3-deoxy-D-manno-octulosonate biosynthesis; 3-deoxy-D-manno-octulosonate from D-ribulose 5-phosphate: step 2/3. It participates in bacterial outer membrane biogenesis; lipopolysaccharide biosynthesis. The sequence is that of 2-dehydro-3-deoxyphosphooctonate aldolase from Cupriavidus necator (strain ATCC 17699 / DSM 428 / KCTC 22496 / NCIMB 10442 / H16 / Stanier 337) (Ralstonia eutropha).